The following is a 100-amino-acid chain: MKLSPVEQEKLLLHVAGELALKRKARGLKLNYPEAVALISSFIMEGARDGKTVAQLMSEAKHVLTAEDVMEGVGDMISDVQVECTFPDGTKLVTVHRPIQ.

It belongs to the urease gamma subunit family. As to quaternary structure, heterotrimer of UreA (gamma), UreB (beta) and UreC (alpha) subunits. Three heterotrimers associate to form the active enzyme.

The protein resides in the cytoplasm. The enzyme catalyses urea + 2 H2O + H(+) = hydrogencarbonate + 2 NH4(+). It participates in nitrogen metabolism; urea degradation; CO(2) and NH(3) from urea (urease route): step 1/1. The protein is Urease subunit gamma of Lysinibacillus sphaericus (strain C3-41).